The sequence spans 964 residues: Fanconi-associated nuclease 1 homolog (964 aa).

Positions 31 to 56 (SRSLQDDAADAEREAAAGGSSSGGGD) are disordered. A UBZ4-type zinc finger spans residues 63–92 (WVACPVCGESIRGTDYCVNTHLDICLTRGT). Residues Cys66, Cys69, His83, and Cys87 each contribute to the Zn(2+) site. Positions 786, 907, 926, and 927 each coordinate Mn(2+). One can recognise a VRR-NUC domain in the interval 844–958 (GIAEEILISS…GFDVEVCKVS (115 aa)).

It belongs to the FAN1 family. Mn(2+) is required as a cofactor. Mg(2+) serves as cofactor.

The catalysed reaction is Hydrolytically removes 5'-nucleotides successively from the 3'-hydroxy termini of 3'-hydroxy-terminated oligonucleotides.. In terms of biological role, nuclease required for the repair of DNA interstrand cross-links (ICL). Acts as a 5'-3' exonuclease that anchors at a cut end of DNA and cleaves DNA successively at every third nucleotide, allowing to excise an ICL from one strand through flanking incisions. In Oryza sativa subsp. japonica (Rice), this protein is Fanconi-associated nuclease 1 homolog.